Here is a 249-residue protein sequence, read N- to C-terminus: Probable phosphatase VVA0289 (249 aa).

Residues His8, His10, His16, His41, Glu74, His102, His132, Asp194, and His196 each contribute to the Zn(2+) site.

The protein belongs to the PHP family. Zn(2+) is required as a cofactor.

In Vibrio vulnificus (strain YJ016), this protein is Probable phosphatase VVA0289.